Reading from the N-terminus, the 1214-residue chain is Reverse gyrase (1214 aa).

An RG N-terminal-type zinc finger spans residues 1-37; it reads MKAIYRDMCPNCRGAITDERLAAKNPCDACLDEPISM. Zn(2+) contacts are provided by Cys-9, Cys-12, Cys-27, and Cys-30. Residues Gln-89 and 106–113 contribute to the ATP site; that span reads APTGMGKS. In terms of domain architecture, Helicase ATP-binding spans 93–252; the sequence is VKRIIKGKSF…WEIIKLKKQL (160 aa). Positions 213 to 216 match the DEAD box motif; it reads DDVD. A topoisomerase I region spans residues 635–1214; the sequence is DLVKSALMIV…YEEILRYVKS (580 aa). In terms of domain architecture, Toprim spans 639–802; sequence SALMIVESPN…VIKRIEFHEV (164 aa). Glu-645 lines the Mg(2+) pocket. The RG C-terminal-type zinc-finger motif lies at 719-748; it reads IKRCRDCGHQFVDWEEKGVCPRCGSRNVYD. Residues Cys-722, Cys-725, Cys-738, and Cys-741 each contribute to the Zn(2+) site. Asp-771 contributes to the Mg(2+) binding site. The region spanning 818–1212 is the Topo IA-type catalytic domain; sequence NEDRVNAQLV…ELYEEILRYV (395 aa). Tyr-955 serves as the catalytic O-(5'-phospho-DNA)-tyrosine intermediate.

The protein in the N-terminal section; belongs to the DEAD box helicase family. DDVD subfamily. This sequence in the C-terminal section; belongs to the type IA topoisomerase family. In terms of assembly, monomer. Zn(2+) serves as cofactor. Mg(2+) is required as a cofactor.

Its subcellular location is the cytoplasm. The enzyme catalyses ATP + H2O = ADP + phosphate + H(+). Its function is as follows. Modifies the topological state of DNA by introducing positive supercoils in an ATP-dependent process. Increases the linking number in steps of +1. Binds to single-stranded DNA, transiently cleaves and then rejoins the ends, introducing a positive supercoil in the process. The scissile phosphodiester is attacked by the catalytic tyrosine of the enzyme, resulting in the formation of a DNA-(5'-phosphotyrosyl)-enzyme intermediate. Probably involved in rewinding DNA strands in regions of the chromosome that have opened up to allow replication, transcription, DNA repair and/or for DNA protection. The chain is Reverse gyrase from Pyrococcus furiosus (strain ATCC 43587 / DSM 3638 / JCM 8422 / Vc1).